A 178-amino-acid polypeptide reads, in one-letter code: Interleukin-10 (178 aa).

A signal peptide spans 1-18 (MHSSALLCCLVLLTGVRA). Cystine bridges form between Cys30–Cys126 and Cys80–Cys132. N-linked (GlcNAc...) asparagine glycosylation is present at Asn134.

The protein belongs to the IL-10 family. In terms of assembly, homodimer. Interacts with IL10RA and IL10RB.

It localises to the secreted. Functionally, major immune regulatory cytokine that acts on many cells of the immune system where it has profound anti-inflammatory functions, limiting excessive tissue disruption caused by inflammation. Mechanistically, IL10 binds to its heterotetrameric receptor comprising IL10RA and IL10RB leading to JAK1 and STAT2-mediated phosphorylation of STAT3. In turn, STAT3 translocates to the nucleus where it drives expression of anti-inflammatory mediators. Targets antigen-presenting cells (APCs) such as macrophages and monocytes and inhibits their release of pro-inflammatory cytokines including granulocyte-macrophage colony-stimulating factor /GM-CSF, granulocyte colony-stimulating factor/G-CSF, IL-1 alpha, IL-1 beta, IL-6, IL-8 and TNF-alpha. Also interferes with antigen presentation by reducing the expression of MHC-class II and co-stimulatory molecules, thereby inhibiting their ability to induce T cell activation. In addition, controls the inflammatory response of macrophages by reprogramming essential metabolic pathways including mTOR signaling. The polypeptide is Interleukin-10 (IL10) (Macaca mulatta (Rhesus macaque)).